Consider the following 593-residue polypeptide: Aspartate--tRNA(Asp/Asn) ligase (593 aa).

E182 provides a ligand contact to L-aspartate. Positions 206 to 209 (QLFK) are aspartate. Position 228 (R228) interacts with L-aspartate. Residues 228–230 (RDE) and Q237 each bind ATP. L-aspartate is bound at residue H455. An ATP-binding site is contributed by E489. L-aspartate is bound at residue R496. Residue 541-544 (GLDR) coordinates ATP.

The protein belongs to the class-II aminoacyl-tRNA synthetase family. Type 1 subfamily. As to quaternary structure, homodimer.

The protein resides in the cytoplasm. The enzyme catalyses tRNA(Asx) + L-aspartate + ATP = L-aspartyl-tRNA(Asx) + AMP + diphosphate. Its function is as follows. Aspartyl-tRNA synthetase with relaxed tRNA specificity since it is able to aspartylate not only its cognate tRNA(Asp) but also tRNA(Asn). Reaction proceeds in two steps: L-aspartate is first activated by ATP to form Asp-AMP and then transferred to the acceptor end of tRNA(Asp/Asn). The chain is Aspartate--tRNA(Asp/Asn) ligase from Geotalea uraniireducens (strain Rf4) (Geobacter uraniireducens).